Consider the following 134-residue polypeptide: L-ectoine synthase (134 aa).

It belongs to the ectoine synthase family.

The enzyme catalyses (2S)-4-acetamido-2-aminobutanoate = L-ectoine + H2O. It functions in the pathway amine and polyamine biosynthesis; ectoine biosynthesis; L-ectoine from L-aspartate 4-semialdehyde: step 3/3. Catalyzes the circularization of gamma-N-acetyl-alpha,gamma-diaminobutyric acid (ADABA) to ectoine (1,4,5,6-tetrahydro-2-methyl-4-pyrimidine carboxylic acid), which is an excellent osmoprotectant. This Sporosarcina pasteurii (Bacillus pasteurii) protein is L-ectoine synthase (ectC).